Reading from the N-terminus, the 267-residue chain is tRNA pseudouridine synthase A (267 aa).

Asp-51 acts as the Nucleophile in catalysis. Tyr-109 provides a ligand contact to substrate.

This sequence belongs to the tRNA pseudouridine synthase TruA family. As to quaternary structure, homodimer.

It catalyses the reaction uridine(38/39/40) in tRNA = pseudouridine(38/39/40) in tRNA. Its function is as follows. Formation of pseudouridine at positions 38, 39 and 40 in the anticodon stem and loop of transfer RNAs. In Staphylococcus aureus (strain MSSA476), this protein is tRNA pseudouridine synthase A.